A 367-amino-acid polypeptide reads, in one-letter code: Dual-specificity RNA methyltransferase RlmN (367 aa).

E91 serves as the catalytic Proton acceptor. In terms of domain architecture, Radical SAM core spans 102–337 (GKVRMTQCLS…AIIRKSKGQD (236 aa)). C109 and C342 form a disulfide bridge. Positions 116, 120, and 123 each coordinate [4Fe-4S] cluster. S-adenosyl-L-methionine contacts are provided by residues 169-170 (GE), S201, 223-225 (SLH), and N299. C342 acts as the S-methylcysteine intermediate in catalysis.

It belongs to the radical SAM superfamily. RlmN family. Requires [4Fe-4S] cluster as cofactor.

It is found in the cytoplasm. It catalyses the reaction adenosine(2503) in 23S rRNA + 2 reduced [2Fe-2S]-[ferredoxin] + 2 S-adenosyl-L-methionine = 2-methyladenosine(2503) in 23S rRNA + 5'-deoxyadenosine + L-methionine + 2 oxidized [2Fe-2S]-[ferredoxin] + S-adenosyl-L-homocysteine. It carries out the reaction adenosine(37) in tRNA + 2 reduced [2Fe-2S]-[ferredoxin] + 2 S-adenosyl-L-methionine = 2-methyladenosine(37) in tRNA + 5'-deoxyadenosine + L-methionine + 2 oxidized [2Fe-2S]-[ferredoxin] + S-adenosyl-L-homocysteine. In terms of biological role, specifically methylates position 2 of adenine 2503 in 23S rRNA and position 2 of adenine 37 in tRNAs. m2A2503 modification seems to play a crucial role in the proofreading step occurring at the peptidyl transferase center and thus would serve to optimize ribosomal fidelity. In Nitratidesulfovibrio vulgaris (strain DSM 19637 / Miyazaki F) (Desulfovibrio vulgaris), this protein is Dual-specificity RNA methyltransferase RlmN.